We begin with the raw amino-acid sequence, 420 residues long: L-rhamnose isomerase (420 aa).

His264, Asp296, and Asp298 together coordinate Mn(2+).

This sequence belongs to the rhamnose isomerase family. It depends on Mn(2+) as a cofactor.

The protein localises to the cytoplasm. The catalysed reaction is L-rhamnopyranose = L-rhamnulose. Its pathway is carbohydrate degradation; L-rhamnose degradation; glycerone phosphate from L-rhamnose: step 1/3. Functionally, catalyzes the interconversion of L-rhamnose and L-rhamnulose. In Listeria monocytogenes serovar 1/2a (strain ATCC BAA-679 / EGD-e), this protein is L-rhamnose isomerase.